A 269-amino-acid chain; its full sequence is MSDMRKKVTIPDILKMKQERRRITMMTAYDYPFARLVDSGGVDAILVGDSLGVVFSGHDNTLSVTMDEMIYHTRAVARAKPQAVLVTDMPFMSYQVSVEEACRNCGRMIQEGGAQAVKIEGGMNMSHVIRAVTSIDIPVMGHIGLTPQSIHRMGGYRVQGRKEQAERIMEDALAVQAAGAFSIVLEGIPSSLAASITAELSIPTIGIGAGPDCDGQVLVIHDILGLCEKYSPKFVKRYAELAPVITDAVNRYVEEVRSGAFPTEEHSFN.

Positions 49 and 88 each coordinate Mg(2+). Residues 49-50, aspartate 88, and lysine 118 contribute to the 3-methyl-2-oxobutanoate site; that span reads DS. Residue glutamate 120 coordinates Mg(2+). Glutamate 186 acts as the Proton acceptor in catalysis.

It belongs to the PanB family. In terms of assembly, homodecamer; pentamer of dimers. Mg(2+) is required as a cofactor.

Its subcellular location is the cytoplasm. The enzyme catalyses 3-methyl-2-oxobutanoate + (6R)-5,10-methylene-5,6,7,8-tetrahydrofolate + H2O = 2-dehydropantoate + (6S)-5,6,7,8-tetrahydrofolate. The protein operates within cofactor biosynthesis; (R)-pantothenate biosynthesis; (R)-pantoate from 3-methyl-2-oxobutanoate: step 1/2. Catalyzes the reversible reaction in which hydroxymethyl group from 5,10-methylenetetrahydrofolate is transferred onto alpha-ketoisovalerate to form ketopantoate. This is 3-methyl-2-oxobutanoate hydroxymethyltransferase from Pelobacter propionicus (strain DSM 2379 / NBRC 103807 / OttBd1).